The sequence spans 107 residues: uncharacterized protein (107 aa).

A run of 2 helical transmembrane segments spans residues 5-25 and 42-62; these read WTII…VINV and ILVI…VGIF. The span at 82–92 shows a compositional bias: basic and acidic residues; it reads IHKQEDTHLAD. The tract at residues 82 to 107 is disordered; it reads IHKQEDTHLADQTDTQDASAMIEKKD.

It localises to the cell membrane. This is an uncharacterized protein from Bacillus subtilis (strain 168).